A 25-amino-acid chain; its full sequence is Insulin mimetic protein (25 aa).

The interval 1–25 (TKDPELKQCKKQQKKQQQYDDDDKK) is disordered.

In terms of processing, glycosylated. Expressed in seed.

This chain is Insulin mimetic protein, found in Cnidoscolus quercifolius.